Reading from the N-terminus, the 67-residue chain is Beta-defensin 123 (67 aa).

Residues Met1–Gly20 form the signal peptide. 3 disulfide bridges follow: Cys25-Cys52, Cys32-Cys46, and Cys36-Cys53.

It belongs to the beta-defensin family.

The protein localises to the secreted. In terms of biological role, has antibacterial activity. This chain is Beta-defensin 123 (DEFB123), found in Pongo pygmaeus (Bornean orangutan).